The sequence spans 211 residues: B3 domain-containing protein At5g42700 (211 aa).

Residues 110-201 constitute a DNA-binding region (TF-B3); it reads FVKSMLQSHV…AFKVYITRVG (92 aa).

Its subcellular location is the nucleus. This Arabidopsis thaliana (Mouse-ear cress) protein is B3 domain-containing protein At5g42700.